A 445-amino-acid polypeptide reads, in one-letter code: Exodeoxyribonuclease 7 large subunit (445 aa).

Belongs to the XseA family. In terms of assembly, heterooligomer composed of large and small subunits.

It is found in the cytoplasm. The enzyme catalyses Exonucleolytic cleavage in either 5'- to 3'- or 3'- to 5'-direction to yield nucleoside 5'-phosphates.. Its function is as follows. Bidirectionally degrades single-stranded DNA into large acid-insoluble oligonucleotides, which are then degraded further into small acid-soluble oligonucleotides. This is Exodeoxyribonuclease 7 large subunit from Xanthomonas euvesicatoria pv. vesicatoria (strain 85-10) (Xanthomonas campestris pv. vesicatoria).